A 548-amino-acid chain; its full sequence is Membrane protein insertase YidC (548 aa).

Residues 6–26 (NLLVIALLFVSFMIWQAWEQD) form a helical membrane-spanning segment. The disordered stretch occupies residues 28–55 (NPQPQAQQTTQTTTTAAGSAADQGVPAS). The span at 30–50 (QPQAQQTTQTTTTAAGSAADQ) shows a compositional bias: low complexity. Transmembrane regions (helical) follow at residues 350–370 (FVGN…GIMY), 420–440 (LGGC…YYML), 458–478 (LSAQ…MFFI), and 499–519 (PVIF…YYIV).

The protein belongs to the OXA1/ALB3/YidC family. Type 1 subfamily. In terms of assembly, interacts with the Sec translocase complex via SecD. Specifically interacts with transmembrane segments of nascent integral membrane proteins during membrane integration.

It localises to the cell inner membrane. Required for the insertion and/or proper folding and/or complex formation of integral membrane proteins into the membrane. Involved in integration of membrane proteins that insert both dependently and independently of the Sec translocase complex, as well as at least some lipoproteins. Aids folding of multispanning membrane proteins. This Shigella flexneri protein is Membrane protein insertase YidC.